The sequence spans 387 residues: Colicin-N (387 aa).

Positions 1–11 (MGSNGADNAHN) are enriched in polar residues. The disordered stretch occupies residues 1–106 (MGSNGADNAH…ITITPDNSKP (106 aa)). Positions 14–30 (FGGGKNPGIGNTSGAGS) are enriched in gly residues. A compositionally biased stretch (low complexity) spans 31 to 48 (NGSASSNRGNSNGWSWSN). Over residues 78 to 87 (GNSGNRGNNG) the composition is skewed to gly residues. The next 2 helical transmembrane spans lie at 325-345 (IIGGVVAGVAISLFGAVLSFL) and 350-370 (LAVTALGVIGIMTISYLSSFI).

Belongs to the channel forming colicin family.

It is found in the cell membrane. In terms of biological role, this colicin is a channel-forming colicin. This class of transmembrane toxins depolarize the cytoplasmic membrane, leading to dissipation of cellular energy. Functionally, colicins are polypeptide toxins produced by and active against E.coli and closely related bacteria. The sequence is that of Colicin-N (cna) from Escherichia coli.